The chain runs to 374 residues: MYLKTLELHNFRNYADLVVEFGSGINVLLGENAQGKTNLLESIYFLALTRSHRTNSDRDLISWKTKAARVSGSVQKEHTVTPLEINLSSKGKNAKVNHLEQSRLSQYVGQLNVILFAPEDLSIVKGSPAVRRKFIDMEFGQMSSKYLYNSAQYRSVLKQRNQYIKQLQFNPKGDQVYLDVLSDQLAAHGAEIIFQRIQFLKKLEKWSQEVHKEISQGKEKLSFQYVSPISSDQADTTEKIYAALQALFQKQREKELQQGKTLVGPHLDDVRFMVNDKNVSTFGSQGQQRTTALSVKLAEIDLMKEETGEYPVLLLDDVLSELDDSRQTHLLTAIQNKVQTFITTTSLSGVAQQLINEPHVFNIDHGVLMQSKEE.

30-37 is an ATP binding site; it reads GENAQGKT.

The protein belongs to the RecF family.

Its subcellular location is the cytoplasm. The RecF protein is involved in DNA metabolism; it is required for DNA replication and normal SOS inducibility. RecF binds preferentially to single-stranded, linear DNA. It also seems to bind ATP. This is DNA replication and repair protein RecF from Pediococcus pentosaceus (strain ATCC 25745 / CCUG 21536 / LMG 10740 / 183-1w).